We begin with the raw amino-acid sequence, 638 residues long: Threonine--tRNA ligase (638 aa).

One can recognise a TGS domain in the interval 1-59; that stretch reads MEKIKVKIKGKEYEVEKGTPLGKIFELAGIKDALGGVINGKIIDLQTPVRESGEIKPVY. The interval 243 to 536 is catalytic; the sequence is DHRRLGKELE…LLEHYAGLLP (294 aa). Zn(2+) is bound by residues cysteine 336, histidine 387, and histidine 513.

This sequence belongs to the class-II aminoacyl-tRNA synthetase family. As to quaternary structure, homodimer. It depends on Zn(2+) as a cofactor.

It is found in the cytoplasm. The enzyme catalyses tRNA(Thr) + L-threonine + ATP = L-threonyl-tRNA(Thr) + AMP + diphosphate + H(+). Catalyzes the attachment of threonine to tRNA(Thr) in a two-step reaction: L-threonine is first activated by ATP to form Thr-AMP and then transferred to the acceptor end of tRNA(Thr). Also edits incorrectly charged L-seryl-tRNA(Thr). The polypeptide is Threonine--tRNA ligase (Aquifex aeolicus (strain VF5)).